Here is a 42-residue protein sequence, read N- to C-terminus: Putative protein RNF216-like (42 aa).

This Homo sapiens (Human) protein is Putative protein RNF216-like (RNF216P1).